Reading from the N-terminus, the 431-residue chain is ETS domain-containing protein Elk-4 (431 aa).

The ETS DNA-binding region spans 5–85 (ITLWQFLLQL…NGQKFVYKFV (81 aa)). The interval 114–139 (SSSSKDVENGGKDKPPQPGAKTSSRN) is disordered. A compositionally biased stretch (basic and acidic residues) spans 118–128 (KDVENGGKDKP). Lys167 participates in a covalent cross-link: Glycyl lysine isopeptide (Lys-Gly) (interchain with G-Cter in SUMO2). The residue at position 180 (Ser180) is a Phosphoserine. 3 disordered regions span residues 251-282 (TTPPISSIPPLQEPPRTPSPPLSSHPDIDTDI), 294-323 (ENLSLEPKDQDSVLLEKDKVNNSSRSKKPK), and 411-431 (TLSGLDGPSTPGPFSPDLQKT). Residues 261 to 273 (LQEPPRTPSPPLS) show a composition bias toward pro residues. The segment covering 299 to 313 (EPKDQDSVLLEKDKV) has biased composition (basic and acidic residues).

Belongs to the ETS family. In terms of assembly, interacts with SIRT7.

The protein resides in the nucleus. In terms of biological role, involved in both transcriptional activation and repression. Interaction with SIRT7 leads to recruitment and stabilization of SIRT7 at promoters, followed by deacetylation of histone H3 at 'Lys-18' (H3K18Ac) and subsequent transcription repression. Forms a ternary complex with the serum response factor (SRF). Requires DNA-bound SRF for ternary complex formation and makes extensive DNA contacts to the 5'side of SRF, but does not bind DNA autonomously. This is ETS domain-containing protein Elk-4 (ELK4) from Homo sapiens (Human).